The following is a 748-amino-acid chain: Transcription factor hmgR (748 aa).

Residues 24–59 (CISCRQRKAKCDLGTGPDGLPLGPPCAKCRREQKPC) constitute a DNA-binding region (zn(2)-C6 fungal-type). Disordered regions lie at residues 108-142 (SQEDSMIESDSLPETEQHRSGHPVTSEGSSNQIDL) and 661-683 (RESTTRHSMVPPSYASATSDEHA).

The protein resides in the nucleus. Its function is as follows. Transcription factor; part of the L-tyrosine degradation gene cluster that mediates the biosynthesis of the brownish pigment pyomelanin as an alternative melanin. Acts as a transcriptional activator for the genes of the tyrosine degradation cluster. The protein is Transcription factor hmgR of Aspergillus fumigatus (strain ATCC MYA-4609 / CBS 101355 / FGSC A1100 / Af293) (Neosartorya fumigata).